The following is a 272-amino-acid chain: Phosphate import ATP-binding protein PstB (272 aa).

The 240-residue stretch at 18–257 (VSMQNVTISY…FNDTQSIFNS (240 aa)) folds into the ABC transporter domain. ATP is bound at residue 50 to 57 (GPSGCGKS).

This sequence belongs to the ABC transporter superfamily. Phosphate importer (TC 3.A.1.7) family. In terms of assembly, the complex is composed of two ATP-binding proteins (PstB), two transmembrane proteins (PstC and PstA) and a solute-binding protein (PstS).

It localises to the cell inner membrane. It catalyses the reaction phosphate(out) + ATP + H2O = ADP + 2 phosphate(in) + H(+). Part of the ABC transporter complex PstSACB involved in phosphate import. Responsible for energy coupling to the transport system. This chain is Phosphate import ATP-binding protein PstB, found in Synechococcus sp. (strain CC9902).